The following is a 146-amino-acid chain: Protein disulfide-isomerase 5-1 (146 aa).

A signal peptide spans 1–25 (MTLGARLVAPMIILLLFIPIELVKA). One can recognise a Thioredoxin domain in the interval 26 to 133 (EVITLTPETF…LKAFVVEETE (108 aa)). Catalysis depends on nucleophile residues cysteine 55 and cysteine 58. Cysteine 55 and cysteine 58 are oxidised to a cystine.

This sequence belongs to the protein disulfide isomerase family.

Acts as a protein-folding catalyst that interacts with nascent polypeptides to catalyze the formation, isomerization, and reduction or oxidation of disulfide bonds. The sequence is that of Protein disulfide-isomerase 5-1 (PDIL5-1) from Arabidopsis thaliana (Mouse-ear cress).